A 399-amino-acid chain; its full sequence is Acetate kinase (399 aa).

Asn7 is a binding site for Mg(2+). Lys14 is an ATP binding site. Residue Arg91 participates in substrate binding. Residue Asp148 is the Proton donor/acceptor of the active site. ATP contacts are provided by residues 208-212 (HLGNG) and 283-285 (DFR). Mg(2+) is bound at residue Glu384.

The protein belongs to the acetokinase family. As to quaternary structure, homodimer. Mg(2+) is required as a cofactor. Requires Mn(2+) as cofactor.

Its subcellular location is the cytoplasm. The catalysed reaction is acetate + ATP = acetyl phosphate + ADP. Its pathway is metabolic intermediate biosynthesis; acetyl-CoA biosynthesis; acetyl-CoA from acetate: step 1/2. In terms of biological role, catalyzes the formation of acetyl phosphate from acetate and ATP. Can also catalyze the reverse reaction. This Dictyoglomus thermophilum (strain ATCC 35947 / DSM 3960 / H-6-12) protein is Acetate kinase.